The primary structure comprises 437 residues: UDP-N-acetylmuramoylalanine--D-glutamate ligase (437 aa).

112 to 118 (GSNGKST) provides a ligand contact to ATP.

It belongs to the MurCDEF family.

The protein resides in the cytoplasm. The enzyme catalyses UDP-N-acetyl-alpha-D-muramoyl-L-alanine + D-glutamate + ATP = UDP-N-acetyl-alpha-D-muramoyl-L-alanyl-D-glutamate + ADP + phosphate + H(+). The protein operates within cell wall biogenesis; peptidoglycan biosynthesis. Its function is as follows. Cell wall formation. Catalyzes the addition of glutamate to the nucleotide precursor UDP-N-acetylmuramoyl-L-alanine (UMA). This Haemophilus influenzae (strain PittEE) protein is UDP-N-acetylmuramoylalanine--D-glutamate ligase.